Here is a 308-residue protein sequence, read N- to C-terminus: tRNA uridine(34) hydroxylase (308 aa).

The region spanning 128 to 222 (ADENTVVVDT…YLEEVPREQS (95 aa)) is the Rhodanese domain. Cys-182 serves as the catalytic Cysteine persulfide intermediate.

Belongs to the TrhO family.

The catalysed reaction is uridine(34) in tRNA + AH2 + O2 = 5-hydroxyuridine(34) in tRNA + A + H2O. In terms of biological role, catalyzes oxygen-dependent 5-hydroxyuridine (ho5U) modification at position 34 in tRNAs. The polypeptide is tRNA uridine(34) hydroxylase (Brucella suis biovar 1 (strain 1330)).